A 35-amino-acid chain; its full sequence is Photosystem II reaction center protein T (35 aa).

Residues 3–23 traverse the membrane as a helical segment; the sequence is ALVYTFLLVSTLGIIFFAIFF.

The protein belongs to the PsbT family. PSII is composed of 1 copy each of membrane proteins PsbA, PsbB, PsbC, PsbD, PsbE, PsbF, PsbH, PsbI, PsbJ, PsbK, PsbL, PsbM, PsbT, PsbY, PsbZ, Psb30/Ycf12, at least 3 peripheral proteins of the oxygen-evolving complex and a large number of cofactors. It forms dimeric complexes.

The protein resides in the plastid. The protein localises to the chloroplast thylakoid membrane. Its function is as follows. Found at the monomer-monomer interface of the photosystem II (PS II) dimer, plays a role in assembly and dimerization of PSII. PSII is a light-driven water plastoquinone oxidoreductase, using light energy to abstract electrons from H(2)O, generating a proton gradient subsequently used for ATP formation. The protein is Photosystem II reaction center protein T of Citrus sinensis (Sweet orange).